A 407-amino-acid chain; its full sequence is Peptidase T (407 aa).

Zn(2+) is bound at residue His77. Asp79 is a catalytic residue. Asp140 serves as a coordination point for Zn(2+). Glu174 (proton acceptor) is an active-site residue. Residues Glu175, Asp197, and His379 each coordinate Zn(2+).

This sequence belongs to the peptidase M20B family. Zn(2+) serves as cofactor.

The protein resides in the cytoplasm. The enzyme catalyses Release of the N-terminal residue from a tripeptide.. Its function is as follows. Cleaves the N-terminal amino acid of tripeptides. This is Peptidase T from Bacteroides fragilis (strain YCH46).